Consider the following 251-residue polypeptide: DNA repair protein RecO (251 aa).

It belongs to the RecO family.

Involved in DNA repair and RecF pathway recombination. This chain is DNA repair protein RecO, found in Lactococcus lactis subsp. cremoris (strain SK11).